The sequence spans 438 residues: Phosphoribosylamine--glycine ligase (438 aa).

Residues 107–319 (RKLFEDYDIP…LAKISKQIVD (213 aa)) enclose the ATP-grasp domain. 134–197 (IDNFDEPVVV…EELLLGEEYT (64 aa)) is an ATP binding site. Residues glutamine 277, glutamate 289, and asparagine 291 each coordinate Mg(2+). The Mn(2+) site is built by glutamine 277, glutamate 289, and asparagine 291.

Belongs to the GARS family. Mg(2+) is required as a cofactor. Mn(2+) serves as cofactor.

It catalyses the reaction 5-phospho-beta-D-ribosylamine + glycine + ATP = N(1)-(5-phospho-beta-D-ribosyl)glycinamide + ADP + phosphate + H(+). It functions in the pathway purine metabolism; IMP biosynthesis via de novo pathway; N(1)-(5-phospho-D-ribosyl)glycinamide from 5-phospho-alpha-D-ribose 1-diphosphate: step 2/2. This chain is Phosphoribosylamine--glycine ligase, found in Methanosphaera stadtmanae (strain ATCC 43021 / DSM 3091 / JCM 11832 / MCB-3).